The sequence spans 498 residues: ATP synthase subunit beta, chloroplastic (498 aa).

172-179 is a binding site for ATP; sequence GGAGVGKT.

Belongs to the ATPase alpha/beta chains family. F-type ATPases have 2 components, CF(1) - the catalytic core - and CF(0) - the membrane proton channel. CF(1) has five subunits: alpha(3), beta(3), gamma(1), delta(1), epsilon(1). CF(0) has four main subunits: a(1), b(1), b'(1) and c(9-12).

Its subcellular location is the plastid. The protein resides in the chloroplast thylakoid membrane. The catalysed reaction is ATP + H2O + 4 H(+)(in) = ADP + phosphate + 5 H(+)(out). In terms of biological role, produces ATP from ADP in the presence of a proton gradient across the membrane. The catalytic sites are hosted primarily by the beta subunits. The chain is ATP synthase subunit beta, chloroplastic from Calycanthus floridus (Eastern sweetshrub).